Reading from the N-terminus, the 108-residue chain is UPF0166 protein MJ1524 (108 aa).

It belongs to the UPF0166 family.

The chain is UPF0166 protein MJ1524 from Methanocaldococcus jannaschii (strain ATCC 43067 / DSM 2661 / JAL-1 / JCM 10045 / NBRC 100440) (Methanococcus jannaschii).